Consider the following 405-residue polypeptide: Probable tRNA sulfurtransferase (405 aa).

The region spanning 60–165 (DQVMARLSQV…REAIYLSTKT (106 aa)) is the THUMP domain. ATP is bound by residues 183-184 (ML), 208-209 (HF), Arg265, Gly287, and Gln296.

This sequence belongs to the ThiI family.

Its subcellular location is the cytoplasm. It catalyses the reaction [ThiI sulfur-carrier protein]-S-sulfanyl-L-cysteine + a uridine in tRNA + 2 reduced [2Fe-2S]-[ferredoxin] + ATP + H(+) = [ThiI sulfur-carrier protein]-L-cysteine + a 4-thiouridine in tRNA + 2 oxidized [2Fe-2S]-[ferredoxin] + AMP + diphosphate. It carries out the reaction [ThiS sulfur-carrier protein]-C-terminal Gly-Gly-AMP + S-sulfanyl-L-cysteinyl-[cysteine desulfurase] + AH2 = [ThiS sulfur-carrier protein]-C-terminal-Gly-aminoethanethioate + L-cysteinyl-[cysteine desulfurase] + A + AMP + 2 H(+). It participates in cofactor biosynthesis; thiamine diphosphate biosynthesis. Its function is as follows. Catalyzes the ATP-dependent transfer of a sulfur to tRNA to produce 4-thiouridine in position 8 of tRNAs, which functions as a near-UV photosensor. Also catalyzes the transfer of sulfur to the sulfur carrier protein ThiS, forming ThiS-thiocarboxylate. This is a step in the synthesis of thiazole, in the thiamine biosynthesis pathway. The sulfur is donated as persulfide by IscS. The protein is Probable tRNA sulfurtransferase of Lacticaseibacillus paracasei (strain ATCC 334 / BCRC 17002 / CCUG 31169 / CIP 107868 / KCTC 3260 / NRRL B-441) (Lactobacillus paracasei).